The sequence spans 331 residues: Holliday junction branch migration complex subunit RuvB (331 aa).

A large ATPase domain (RuvB-L) region spans residues 1–171 (MTEPLDAALR…FGIIEHLEYY (171 aa)). ATP is bound by residues Leu-9, Arg-10, Gly-51, Lys-54, Thr-55, Thr-56, 118–120 (EDF), Arg-161, Tyr-171, and Arg-208. Residue Thr-55 participates in Mg(2+) binding. The segment at 172-242 (TPEEIGTNLL…RAQDALDKLG (71 aa)) is small ATPAse domain (RuvB-S). A head domain (RuvB-H) region spans residues 245–331 (TAGLDERDKK…AESDLGLYTN (87 aa)). Arg-300 and Arg-305 together coordinate DNA.

It belongs to the RuvB family. In terms of assembly, homohexamer. Forms an RuvA(8)-RuvB(12)-Holliday junction (HJ) complex. HJ DNA is sandwiched between 2 RuvA tetramers; dsDNA enters through RuvA and exits via RuvB. An RuvB hexamer assembles on each DNA strand where it exits the tetramer. Each RuvB hexamer is contacted by two RuvA subunits (via domain III) on 2 adjacent RuvB subunits; this complex drives branch migration. In the full resolvosome a probable DNA-RuvA(4)-RuvB(12)-RuvC(2) complex forms which resolves the HJ.

The protein localises to the cytoplasm. It carries out the reaction ATP + H2O = ADP + phosphate + H(+). In terms of biological role, the RuvA-RuvB-RuvC complex processes Holliday junction (HJ) DNA during genetic recombination and DNA repair, while the RuvA-RuvB complex plays an important role in the rescue of blocked DNA replication forks via replication fork reversal (RFR). RuvA specifically binds to HJ cruciform DNA, conferring on it an open structure. The RuvB hexamer acts as an ATP-dependent pump, pulling dsDNA into and through the RuvAB complex. RuvB forms 2 homohexamers on either side of HJ DNA bound by 1 or 2 RuvA tetramers; 4 subunits per hexamer contact DNA at a time. Coordinated motions by a converter formed by DNA-disengaged RuvB subunits stimulates ATP hydrolysis and nucleotide exchange. Immobilization of the converter enables RuvB to convert the ATP-contained energy into a lever motion, pulling 2 nucleotides of DNA out of the RuvA tetramer per ATP hydrolyzed, thus driving DNA branch migration. The RuvB motors rotate together with the DNA substrate, which together with the progressing nucleotide cycle form the mechanistic basis for DNA recombination by continuous HJ branch migration. Branch migration allows RuvC to scan DNA until it finds its consensus sequence, where it cleaves and resolves cruciform DNA. In Deinococcus geothermalis (strain DSM 11300 / CIP 105573 / AG-3a), this protein is Holliday junction branch migration complex subunit RuvB.